The sequence spans 146 residues: Ferredoxin-thioredoxin reductase catalytic chain, chloroplastic (146 aa).

The N-terminal 26 residues, M1–R26, are a transit peptide targeting the chloroplast. C85 provides a ligand contact to [4Fe-4S] cluster. Residue C87 is the Nucleophile of the active site. Cysteines 87 and 117 form a disulfide. [4Fe-4S] cluster contacts are provided by C104, C106, and C115.

It belongs to the ferredoxin thioredoxin reductase beta subunit family. Heterodimer of subunit A (variable subunit) and subunit B (catalytic subunit). Heterodimeric FTR forms a complex with ferredoxin and thioredoxin. It depends on [4Fe-4S] cluster as a cofactor.

It localises to the plastid. The protein localises to the chloroplast. It carries out the reaction [thioredoxin]-disulfide + 2 reduced [2Fe-2S]-[ferredoxin] + 2 H(+) = [thioredoxin]-dithiol + 2 oxidized [2Fe-2S]-[ferredoxin]. Its function is as follows. Catalytic subunit of the ferredoxin-thioredoxin reductase (FTR), which catalyzes the two-electron reduction of thioredoxins by the electrons provided by reduced ferredoxin. The protein is Ferredoxin-thioredoxin reductase catalytic chain, chloroplastic of Oryza sativa subsp. japonica (Rice).